The following is a 224-amino-acid chain: 7-cyano-7-deazaguanine synthase (224 aa).

10–20 provides a ligand contact to ATP; the sequence is LSGGLDSATVV. Zn(2+) is bound by residues Cys-189, Cys-199, Cys-202, and Cys-205.

It belongs to the QueC family. Zn(2+) is required as a cofactor.

It catalyses the reaction 7-carboxy-7-deazaguanine + NH4(+) + ATP = 7-cyano-7-deazaguanine + ADP + phosphate + H2O + H(+). Its pathway is purine metabolism; 7-cyano-7-deazaguanine biosynthesis. Its function is as follows. Catalyzes the ATP-dependent conversion of 7-carboxy-7-deazaguanine (CDG) to 7-cyano-7-deazaguanine (preQ(0)). The chain is 7-cyano-7-deazaguanine synthase from Pseudomonas paraeruginosa (strain DSM 24068 / PA7) (Pseudomonas aeruginosa (strain PA7)).